Reading from the N-terminus, the 248-residue chain is Proteasome subunit alpha (248 aa).

It belongs to the peptidase T1A family. The 20S proteasome core is composed of 14 alpha and 14 beta subunits that assemble into four stacked heptameric rings, resulting in a barrel-shaped structure. The two inner rings, each composed of seven catalytic beta subunits, are sandwiched by two outer rings, each composed of seven alpha subunits. The catalytic chamber with the active sites is on the inside of the barrel. Has a gated structure, the ends of the cylinder being occluded by the N-termini of the alpha-subunits. Is capped at one or both ends by the proteasome regulatory ATPase, PAN.

Its subcellular location is the cytoplasm. The formation of the proteasomal ATPase PAN-20S proteasome complex, via the docking of the C-termini of PAN into the intersubunit pockets in the alpha-rings, triggers opening of the gate for substrate entry. Interconversion between the open-gate and close-gate conformations leads to a dynamic regulation of the 20S proteasome proteolysis activity. Component of the proteasome core, a large protease complex with broad specificity involved in protein degradation. The sequence is that of Proteasome subunit alpha from Methanothermobacter thermautotrophicus (strain ATCC 29096 / DSM 1053 / JCM 10044 / NBRC 100330 / Delta H) (Methanobacterium thermoautotrophicum).